A 196-amino-acid chain; its full sequence is Molybdenum cofactor guanylyltransferase (196 aa).

Residues 10-12 (LAG), lysine 23, asparagine 51, aspartate 69, and aspartate 99 each bind GTP. Residue aspartate 99 participates in Mg(2+) binding.

Belongs to the MobA family. In terms of assembly, monomer. The cofactor is Mg(2+).

It is found in the cytoplasm. It catalyses the reaction Mo-molybdopterin + GTP + H(+) = Mo-molybdopterin guanine dinucleotide + diphosphate. Functionally, transfers a GMP moiety from GTP to Mo-molybdopterin (Mo-MPT) cofactor (Moco or molybdenum cofactor) to form Mo-molybdopterin guanine dinucleotide (Mo-MGD) cofactor. This is Molybdenum cofactor guanylyltransferase from Shewanella loihica (strain ATCC BAA-1088 / PV-4).